The primary structure comprises 284 residues: Bifunctional protein FolD (284 aa).

Residues 165 to 167, Thr-192, and Val-233 contribute to the NADP(+) site; that span reads GRG.

The protein belongs to the tetrahydrofolate dehydrogenase/cyclohydrolase family. In terms of assembly, homodimer.

It catalyses the reaction (6R)-5,10-methylene-5,6,7,8-tetrahydrofolate + NADP(+) = (6R)-5,10-methenyltetrahydrofolate + NADPH. The catalysed reaction is (6R)-5,10-methenyltetrahydrofolate + H2O = (6R)-10-formyltetrahydrofolate + H(+). The protein operates within one-carbon metabolism; tetrahydrofolate interconversion. Functionally, catalyzes the oxidation of 5,10-methylenetetrahydrofolate to 5,10-methenyltetrahydrofolate and then the hydrolysis of 5,10-methenyltetrahydrofolate to 10-formyltetrahydrofolate. The sequence is that of Bifunctional protein FolD from Corynebacterium glutamicum (strain R).